The sequence spans 458 residues: Argininosuccinate lyase (458 aa).

The protein belongs to the lyase 1 family. Argininosuccinate lyase subfamily.

It localises to the cytoplasm. It carries out the reaction 2-(N(omega)-L-arginino)succinate = fumarate + L-arginine. Its pathway is amino-acid biosynthesis; L-arginine biosynthesis; L-arginine from L-ornithine and carbamoyl phosphate: step 3/3. The sequence is that of Argininosuccinate lyase from Salmonella typhimurium (strain LT2 / SGSC1412 / ATCC 700720).